The sequence spans 334 residues: Aspartate carbamoyltransferase catalytic subunit (334 aa).

Residues arginine 71 and threonine 72 each contribute to the carbamoyl phosphate site. Position 99 (lysine 99) interacts with L-aspartate. Positions 121, 151, and 154 each coordinate carbamoyl phosphate. L-aspartate is bound by residues arginine 184 and arginine 239. Glycine 280 and proline 281 together coordinate carbamoyl phosphate.

The protein belongs to the aspartate/ornithine carbamoyltransferase superfamily. ATCase family. Heterododecamer (2C3:3R2) of six catalytic PyrB chains organized as two trimers (C3), and six regulatory PyrI chains organized as three dimers (R2).

The enzyme catalyses carbamoyl phosphate + L-aspartate = N-carbamoyl-L-aspartate + phosphate + H(+). The protein operates within pyrimidine metabolism; UMP biosynthesis via de novo pathway; (S)-dihydroorotate from bicarbonate: step 2/3. In terms of biological role, catalyzes the condensation of carbamoyl phosphate and aspartate to form carbamoyl aspartate and inorganic phosphate, the committed step in the de novo pyrimidine nucleotide biosynthesis pathway. In Pseudomonas syringae pv. tomato (strain ATCC BAA-871 / DC3000), this protein is Aspartate carbamoyltransferase catalytic subunit.